A 427-amino-acid polypeptide reads, in one-letter code: Gamma-glutamyl phosphate reductase (427 aa).

The protein belongs to the gamma-glutamyl phosphate reductase family.

The protein resides in the cytoplasm. The catalysed reaction is L-glutamate 5-semialdehyde + phosphate + NADP(+) = L-glutamyl 5-phosphate + NADPH + H(+). It participates in amino-acid biosynthesis; L-proline biosynthesis; L-glutamate 5-semialdehyde from L-glutamate: step 2/2. Functionally, catalyzes the NADPH-dependent reduction of L-glutamate 5-phosphate into L-glutamate 5-semialdehyde and phosphate. The product spontaneously undergoes cyclization to form 1-pyrroline-5-carboxylate. This Sinorhizobium medicae (strain WSM419) (Ensifer medicae) protein is Gamma-glutamyl phosphate reductase.